The primary structure comprises 165 residues: NADH-quinone oxidoreductase subunit I (165 aa).

2 consecutive 4Fe-4S ferredoxin-type domains span residues 66–98 and 109–138; these read HRLT…ITAT and SKFT…MDTG. [4Fe-4S] cluster is bound by residues Cys78, Cys81, Cys84, Cys88, Cys118, Cys121, Cys124, and Cys128.

It belongs to the complex I 23 kDa subunit family. In terms of assembly, NDH-1 is composed of 14 different subunits. Subunits NuoA, H, J, K, L, M, N constitute the membrane sector of the complex. The cofactor is [4Fe-4S] cluster.

It localises to the cell inner membrane. It catalyses the reaction a quinone + NADH + 5 H(+)(in) = a quinol + NAD(+) + 4 H(+)(out). Functionally, NDH-1 shuttles electrons from NADH, via FMN and iron-sulfur (Fe-S) centers, to quinones in the respiratory chain. The immediate electron acceptor for the enzyme in this species is believed to be ubiquinone. Couples the redox reaction to proton translocation (for every two electrons transferred, four hydrogen ions are translocated across the cytoplasmic membrane), and thus conserves the redox energy in a proton gradient. The polypeptide is NADH-quinone oxidoreductase subunit I (Campylobacter fetus subsp. fetus (strain 82-40)).